Here is a 364-residue protein sequence, read N- to C-terminus: RNA polymerase sigma factor SigA (364 aa).

The interval L132 to T202 is sigma-70 factor domain-2. The Interaction with polymerase core subunit RpoC signature appears at D156 to Q159. The segment at E211–Y287 is sigma-70 factor domain-3. The tract at residues V300–H353 is sigma-70 factor domain-4. The segment at residues L326–A345 is a DNA-binding region (H-T-H motif).

Belongs to the sigma-70 factor family. RpoD/SigA subfamily. Interacts transiently with the RNA polymerase catalytic core.

The protein resides in the cytoplasm. In terms of biological role, sigma factors are initiation factors that promote the attachment of RNA polymerase to specific initiation sites and are then released. This sigma factor is the primary sigma factor during exponential growth. In Lactococcus lactis subsp. cremoris (Streptococcus cremoris), this protein is RNA polymerase sigma factor SigA.